The following is a 502-amino-acid chain: Aspartyl/glutamyl-tRNA(Asn/Gln) amidotransferase subunit B (502 aa).

It belongs to the GatB/GatE family. GatB subfamily. Heterotrimer of A, B and C subunits.

The enzyme catalyses L-glutamyl-tRNA(Gln) + L-glutamine + ATP + H2O = L-glutaminyl-tRNA(Gln) + L-glutamate + ADP + phosphate + H(+). The catalysed reaction is L-aspartyl-tRNA(Asn) + L-glutamine + ATP + H2O = L-asparaginyl-tRNA(Asn) + L-glutamate + ADP + phosphate + 2 H(+). Functionally, allows the formation of correctly charged Asn-tRNA(Asn) or Gln-tRNA(Gln) through the transamidation of misacylated Asp-tRNA(Asn) or Glu-tRNA(Gln) in organisms which lack either or both of asparaginyl-tRNA or glutaminyl-tRNA synthetases. The reaction takes place in the presence of glutamine and ATP through an activated phospho-Asp-tRNA(Asn) or phospho-Glu-tRNA(Gln). This Pseudarthrobacter chlorophenolicus (strain ATCC 700700 / DSM 12829 / CIP 107037 / JCM 12360 / KCTC 9906 / NCIMB 13794 / A6) (Arthrobacter chlorophenolicus) protein is Aspartyl/glutamyl-tRNA(Asn/Gln) amidotransferase subunit B.